The chain runs to 345 residues: MAVSRTLRELAEYLGGTVAGDESKTISGVASLDDAADHQITFLANPRYAPKVATTGAGAVVLPPGGERHGRNAIHVANPYLAFAKLLTLFHVAPRKPQGVMEGALVGHNVAMGSDVTIYPGAFVGDGVTLGDRVTIFPGVVIYEGVTLGSDVTLHSNVVVYQGCRIGNRVTIHAGTIIGSDGFGYAPDGDGFYKIPQLGIVVIEDDVEVGANTTIDRAALAATRIGRGTKIDNLVMIAHNCVIGENCTIVSQVGISGSTKLGRRVTLAGQVGVAGHLEIGDNSMVGAKSGIPGNIPAGSMVSGIPAFNHRDWLRASAVVPKLPELRKTIAELEKRVRELEEKQGA.

The Proton acceptor role is filled by histidine 239.

The protein belongs to the transferase hexapeptide repeat family. LpxD subfamily. Homotrimer.

The catalysed reaction is a UDP-3-O-[(3R)-3-hydroxyacyl]-alpha-D-glucosamine + a (3R)-hydroxyacyl-[ACP] = a UDP-2-N,3-O-bis[(3R)-3-hydroxyacyl]-alpha-D-glucosamine + holo-[ACP] + H(+). It participates in bacterial outer membrane biogenesis; LPS lipid A biosynthesis. In terms of biological role, catalyzes the N-acylation of UDP-3-O-acylglucosamine using 3-hydroxyacyl-ACP as the acyl donor. Is involved in the biosynthesis of lipid A, a phosphorylated glycolipid that anchors the lipopolysaccharide to the outer membrane of the cell. The sequence is that of UDP-3-O-acylglucosamine N-acyltransferase from Geobacter metallireducens (strain ATCC 53774 / DSM 7210 / GS-15).